A 223-amino-acid polypeptide reads, in one-letter code: Killer cell lectin-like receptor subfamily B member 1B allele A (223 aa).

The Cytoplasmic portion of the chain corresponds to 1-45; that stretch reads MDTAVVYADLHLARTGEPKREPPPSLSPDTCQCPRWHRLALKLGC. The ITIM motif signature appears at 5–10; the sequence is VVYADL. Residues 31 to 34 carry the LCK-binding motif motif; it reads CQCP. A helical; Signal-anchor for type II membrane protein membrane pass occupies residues 46 to 66; it reads ACLILLVLSVIGLGVLVLTLL. At 67–223 the chain is on the extracellular side; the sequence is QKPLIQNSPA…LKRESTCNDS (157 aa). The 111-residue stretch at 101–211 folds into the C-type lectin domain; that stretch reads HQDKCFHVSQ…CDSDNIWICQ (111 aa). Cystine bridges form between cysteine 122–cysteine 210 and cysteine 189–cysteine 202.

In terms of assembly, homodimer; disulfide-linked. Interacts with tyrosine kinase LCK. Binds PTPN6/SHP-1 in a phosphorylation-dependent manner. Expressed in a subset of natural killer cells.

It localises to the membrane. In terms of biological role, receptor for CLEC2D/OCIL. Ligand-binding contributes to inhibition of cytotoxic natural killer (NK) cells. May mediate MHC class I-independent 'missing-self' recognition of allografts, tumor cells and virus-infected cells. This is Killer cell lectin-like receptor subfamily B member 1B allele A from Rattus norvegicus (Rat).